A 368-amino-acid polypeptide reads, in one-letter code: D-alanine--D-alanine ligase (368 aa).

The 204-residue stretch at 145–348 (KRLLQGAGLH…YQDLITTLIE (204 aa)) folds into the ATP-grasp domain. 175-230 (ADQLGLPLFIKPANQGSSVGVNKATTEAEFTAAIEEAFSYDHKVLIEAAIKGREIE) serves as a coordination point for ATP. Mg(2+) is bound by residues aspartate 302, glutamate 315, and asparagine 317.

The protein belongs to the D-alanine--D-alanine ligase family. Mg(2+) is required as a cofactor. It depends on Mn(2+) as a cofactor.

The protein resides in the cytoplasm. The enzyme catalyses 2 D-alanine + ATP = D-alanyl-D-alanine + ADP + phosphate + H(+). The protein operates within cell wall biogenesis; peptidoglycan biosynthesis. In terms of biological role, cell wall formation. This chain is D-alanine--D-alanine ligase, found in Shouchella clausii (strain KSM-K16) (Alkalihalobacillus clausii).